Consider the following 101-residue polypeptide: NADH-quinone oxidoreductase subunit K (101 aa).

3 helical membrane-spanning segments follow: residues 4-24, 30-50, and 61-81; these read LTHY…GIFM, LVLL…FIAF, and IFVF…LAIM.

This sequence belongs to the complex I subunit 4L family. NDH-1 is composed of 14 different subunits. Subunits NuoA, H, J, K, L, M, N constitute the membrane sector of the complex.

Its subcellular location is the cell inner membrane. It catalyses the reaction a quinone + NADH + 5 H(+)(in) = a quinol + NAD(+) + 4 H(+)(out). In terms of biological role, NDH-1 shuttles electrons from NADH, via FMN and iron-sulfur (Fe-S) centers, to quinones in the respiratory chain. The immediate electron acceptor for the enzyme in this species is believed to be ubiquinone. Couples the redox reaction to proton translocation (for every two electrons transferred, four hydrogen ions are translocated across the cytoplasmic membrane), and thus conserves the redox energy in a proton gradient. The chain is NADH-quinone oxidoreductase subunit K from Neisseria meningitidis serogroup B (strain ATCC BAA-335 / MC58).